A 152-amino-acid polypeptide reads, in one-letter code: Probable histone H2A.3 (152 aa).

Disordered stretches follow at residues 1-25 and 129-152; these read MDAS…KKSV and KTER…PKKA. A compositionally biased stretch (basic residues) spans 7–25; it reads TTKKGAGGRKGGGPRKKSV. The segment covering 129–142 has biased composition (basic and acidic residues); that stretch reads KTERANTGGKEPKT. The short motif at 148 to 151 is the SPKK motif element; the sequence is SPKK.

It belongs to the histone H2A family. As to quaternary structure, the nucleosome is a histone octamer containing two molecules each of H2A, H2B, H3 and H4 assembled in one H3-H4 heterotetramer and two H2A-H2B heterodimers. The octamer wraps approximately 147 bp of DNA.

It is found in the nucleus. The protein resides in the chromosome. Functionally, core component of nucleosome. Nucleosomes wrap and compact DNA into chromatin, limiting DNA accessibility to the cellular machineries which require DNA as a template. Histones thereby play a central role in transcription regulation, DNA repair, DNA replication and chromosomal stability. DNA accessibility is regulated via a complex set of post-translational modifications of histones, also called histone code, and nucleosome remodeling. This Medicago truncatula (Barrel medic) protein is Probable histone H2A.3.